Here is a 389-residue protein sequence, read N- to C-terminus: 23S rRNA (uracil(747)-C(5))-methyltransferase RlmC (389 aa).

Residues Cys6, Cys14, Cys17, and Cys92 each contribute to the [4Fe-4S] cluster site. S-adenosyl-L-methionine is bound by residues Gln217, Phe246, Glu273, and Asn319. The Nucleophile role is filled by Cys346.

Belongs to the class I-like SAM-binding methyltransferase superfamily. RNA M5U methyltransferase family. RlmC subfamily.

It catalyses the reaction uridine(747) in 23S rRNA + S-adenosyl-L-methionine = 5-methyluridine(747) in 23S rRNA + S-adenosyl-L-homocysteine + H(+). Functionally, catalyzes the formation of 5-methyl-uridine at position 747 (m5U747) in 23S rRNA. The chain is 23S rRNA (uracil(747)-C(5))-methyltransferase RlmC from Glaesserella parasuis serovar 5 (strain SH0165) (Haemophilus parasuis).